Consider the following 145-residue polypeptide: Large ribosomal subunit protein bL9 (145 aa).

Belongs to the bacterial ribosomal protein bL9 family.

Its function is as follows. Binds to the 23S rRNA. The chain is Large ribosomal subunit protein bL9 from Mesomycoplasma hyopneumoniae (strain 7448) (Mycoplasma hyopneumoniae).